We begin with the raw amino-acid sequence, 213 residues long: 3-dehydroquinate dehydratase (213 aa).

3-dehydroquinate-binding positions include 27-29 and Arg53; that span reads EVR. The Proton donor/acceptor role is filled by His111. The active-site Schiff-base intermediate with substrate is the Lys138. The 3-dehydroquinate site is built by Arg175 and Gln197.

Belongs to the type-I 3-dehydroquinase family. Homodimer.

The catalysed reaction is 3-dehydroquinate = 3-dehydroshikimate + H2O. It functions in the pathway metabolic intermediate biosynthesis; chorismate biosynthesis; chorismate from D-erythrose 4-phosphate and phosphoenolpyruvate: step 3/7. Its function is as follows. Involved in the third step of the chorismate pathway, which leads to the biosynthesis of aromatic amino acids. Catalyzes the cis-dehydration of 3-dehydroquinate (DHQ) and introduces the first double bond of the aromatic ring to yield 3-dehydroshikimate. The polypeptide is 3-dehydroquinate dehydratase (Thermococcus gammatolerans (strain DSM 15229 / JCM 11827 / EJ3)).